The primary structure comprises 309 residues: Cytochrome c biogenesis protein CcsA (309 aa).

The next 8 helical transmembrane spans lie at Leu-18–Phe-38, Ser-43–Phe-63, Ile-73–Leu-93, Ile-102–Leu-122, Val-148–Ile-168, Ser-216–Asn-236, Thr-250–Ile-267, and Leu-279–Ile-299.

It belongs to the CcmF/CycK/Ccl1/NrfE/CcsA family. In terms of assembly, may interact with ccs1.

The protein localises to the cellular thylakoid membrane. Its function is as follows. Required during biogenesis of c-type cytochromes (cytochrome c6 and cytochrome f) at the step of heme attachment. The polypeptide is Cytochrome c biogenesis protein CcsA (Prochlorococcus marinus (strain MIT 9301)).